The chain runs to 326 residues: MDYTHQTALIPCGQDKYMPKSELLLHLKTYNLYYEGQNLQLRHREEEDEFIVEGLLNISWGLRRPIRLQMQDDHERIRPPPSSSSWHSGCNLGAQGTTLKPLTVPTVQISEVDMPVENMEMHSPTDSRGLKPVQEDTPQLMRTRSDVGVRRRGNVRTSSDQRRIRRHRFSINGHFYNHKTSVFTPAYGSVTNVRINSTMTTPQVLKLLLNKFKIENSAEEFALYVVHTSGEKQKLKNSDYPLIARILQGPCEQISKVFLMEKDQVEEVTYDVAQYIKFEMPVLKSFIQKLQEEEDREVEKLMQKYTVLRLMIRQRLEEIAETPETI.

Positions 176 to 264 (YNHKTSVFTP…SKVFLMEKDQ (89 aa)) constitute a Ras-associating domain. The SARAH domain occupies 272-319 (VAQYIKFEMPVLKSFIQKLQEEEDREVEKLMQKYTVLRLMIRQRLEEI).

In terms of assembly, interacts directly with activated KRAS in a GTP-dependent manner. Interacts (via SARAH domain) with STK3/MST2 and STK4/MST1. In terms of processing, phosphorylated by STK3/MST2 and STK4/MST1.

Its subcellular location is the nucleus. It localises to the cytoplasm. It is found in the chromosome. The protein resides in the centromere. The protein localises to the kinetochore. Functionally, potential tumor suppressor. Acts as a KRAS-specific effector protein. May promote apoptosis and cell cycle arrest. Stabilizes STK3/MST2 by protecting it from proteasomal degradation. This is Ras association domain-containing protein 2 (Rassf2) from Rattus norvegicus (Rat).